The chain runs to 90 residues: ESAT-6-like protein EsxE (90 aa).

This sequence belongs to the WXG100 family. ESAT-6 subfamily.

The protein resides in the secreted. This chain is ESAT-6-like protein EsxE, found in Mycobacterium tuberculosis (strain CDC 1551 / Oshkosh).